The sequence spans 190 residues: Xanthine phosphoribosyltransferase (190 aa).

Positions 20 and 27 each coordinate xanthine. 5-phospho-alpha-D-ribose 1-diphosphate is bound at residue 128–132 (ANGKA). K156 serves as a coordination point for xanthine.

This sequence belongs to the purine/pyrimidine phosphoribosyltransferase family. Xpt subfamily. Homodimer.

It is found in the cytoplasm. The enzyme catalyses XMP + diphosphate = xanthine + 5-phospho-alpha-D-ribose 1-diphosphate. Its pathway is purine metabolism; XMP biosynthesis via salvage pathway; XMP from xanthine: step 1/1. Functionally, converts the preformed base xanthine, a product of nucleic acid breakdown, to xanthosine 5'-monophosphate (XMP), so it can be reused for RNA or DNA synthesis. This is Xanthine phosphoribosyltransferase from Stutzerimonas stutzeri (strain A1501) (Pseudomonas stutzeri).